The primary structure comprises 215 residues: Osteoclast-stimulating factor 1 (215 aa).

At Ser2 the chain carries N-acetylserine. One can recognise an SH3 domain in the interval Gly12–Glu71. ANK repeat units follow at residues Ser72–Gly101, Ala105–Gln135, and Leu139–Leu168. Positions Lys192–Asp215 are disordered. A Phosphothreonine modification is found at Thr201. 2 positions are modified to phosphoserine: Ser203 and Ser214.

As to quaternary structure, interacts with C-SRC and SMN1. Interacts with FASLG.

Its subcellular location is the cytoplasm. Induces bone resorption, acting probably through a signaling cascade which results in the secretion of factor(s) enhancing osteoclast formation and activity. This is Osteoclast-stimulating factor 1 (Ostf1) from Mus musculus (Mouse).